Here is a 1577-residue protein sequence, read N- to C-terminus: Dynamin-binding protein (1577 aa).

The residue at position 1 (Met1) is an N-acetylmethionine. 4 consecutive SH3 domains span residues 2 to 61 (EAGS…IVTI), 66 to 126 (EGER…ELCL), 145 to 204 (YSMG…LLGP), and 243 to 302 (EPGT…LCPD). Disordered stretches follow at residues 211–244 (SVSS…EEEP) and 335–395 (EEQR…WEMP). Positions 230-244 (VGEEEIGPDEDEEEP) are enriched in acidic residues. Residues 335 to 344 (EEQRHETSDH) show a composition bias toward basic and acidic residues. Ser496 carries the post-translational modification Phosphoserine. 2 disordered regions span residues 591 to 624 (GSSK…TSPH) and 639 to 659 (VRPS…NAVS). The span at 639–649 (VRPSRPAPLPP) shows a compositional bias: pro residues. Ser684 is subject to Phosphoserine. Residues 693-757 (LVLVRIEEME…ELQQLREMTL (65 aa)) are a coiled coil. One can recognise a DH domain in the interval 784-967 (KRAKVIEELL…KEINVNINEY (184 aa)). Residues 1008 to 1217 (LKHLTGFAPQ…LKVAGREGNL (210 aa)) enclose the BAR domain. The stretch at 1136-1173 (ERAEKLKDKKTLEELQSARNNYEALNAQLLDELPKFHQ) forms a coiled coil. The 64-residue stretch at 1285-1348 (PPEKLFQAER…YSSFLKPYNP (64 aa)) folds into the SH3 5 domain. The disordered stretch occupies residues 1348–1487 (PRRSHSDASV…SVPGRNGQSQ (140 aa)). Residues 1376–1405 (RQNSGSTLTFNPSSMAVSFTSGSCQKQPQD) are compositionally biased toward polar residues. The span at 1419–1442 (SASLNPSNSESSPSRCPSDPDSTS) shows a compositional bias: low complexity. Residues 1513 to 1576 (EGNQVYFAVY…PSNYIRKTEY (64 aa)) form the SH3 6 domain.

Binds DNM1 via its N-terminal SH3 domains. The C-terminal SH3 domain binds a complex containing actin, tubulin, Hsp70 and actin-regulatory proteins, such as ENAH, EVL, WIRE, CR16, WAVE1 and NAP1L1. Interacts with FASLG. Interacts (via SH3 domain 6) with WASL. Interacts (via SH3 domain 6) interacts with ENAH. Interacts (via C-terminal domain) with TJP1; required for the apical cell-cell junction localization of DNMBP. In terms of assembly, (Microbial infection) Interacts (via SH3 domain 6) with L.monocytogenes InlC. As to expression, detected in heart, brain, lung, liver, skeletal muscle, kidney and pancreas.

The protein resides in the cytoplasm. Its subcellular location is the golgi apparatus. It localises to the golgi stack. The protein localises to the cytoskeleton. It is found in the synapse. The protein resides in the cell junction. Its function is as follows. Plays a critical role as a guanine nucleotide exchange factor (GEF) for CDC42 in several intracellular processes associated with the actin and microtubule cytoskeleton. Regulates the structure of apical junctions through F-actin organization in epithelial cells. Participates in the normal lumenogenesis of epithelial cell cysts by regulating spindle orientation. Plays a role in ciliogenesis. May play a role in membrane trafficking between the cell surface and the Golgi. The sequence is that of Dynamin-binding protein from Homo sapiens (Human).